Reading from the N-terminus, the 293-residue chain is uncharacterized protein (293 aa).

The 58-residue stretch at 1-58 folds into the HTH lysR-type domain; sequence MELKQLITFITAAEHVNFTLTAKMLNYAQSSVTSQIKSLEEEIGTPLFERLGKRLILT. A DNA-binding region (H-T-H motif) is located at residues 18–37; that stretch reads FTLTAKMLNYAQSSVTSQIK.

It belongs to the LysR transcriptional regulatory family.

It localises to the cytoplasm. This is an uncharacterized protein from Bacillus subtilis (strain 168).